Here is a 437-residue protein sequence, read N- to C-terminus: Adenylosuccinate synthetase (437 aa).

Residues 12–18 and 40–42 contribute to the GTP site; these read GDEGKGK and GHT. The active-site Proton acceptor is the aspartate 13. 2 residues coordinate Mg(2+): aspartate 13 and glycine 40. IMP-binding positions include 13 to 16, 38 to 41, threonine 131, arginine 145, glutamine 225, and threonine 240; these read DEGK and NAGH. The Proton donor role is filled by histidine 41. Residues 281–304 form a disordered region; that stretch reads TELLGADGKPDADGERLGTRGHEF. The span at 288-303 shows a compositional bias: basic and acidic residues; that stretch reads GKPDADGERLGTRGHE. 306–312 serves as a coordination point for substrate; sequence TTTGRQR. Residue arginine 310 participates in IMP binding. GTP-binding positions include arginine 312, 338-340, and 420-422; these read KLD and STS.

This sequence belongs to the adenylosuccinate synthetase family. Homodimer. Requires Mg(2+) as cofactor.

It localises to the cytoplasm. It catalyses the reaction IMP + L-aspartate + GTP = N(6)-(1,2-dicarboxyethyl)-AMP + GDP + phosphate + 2 H(+). It functions in the pathway purine metabolism; AMP biosynthesis via de novo pathway; AMP from IMP: step 1/2. In terms of biological role, plays an important role in the de novo pathway of purine nucleotide biosynthesis. Catalyzes the first committed step in the biosynthesis of AMP from IMP. The protein is Adenylosuccinate synthetase of Ruegeria sp. (strain TM1040) (Silicibacter sp.).